Reading from the N-terminus, the 785-residue chain is Mitochondrial intermediate peptidase (785 aa).

The transit peptide at 1–26 directs the protein to the mitochondrion; that stretch reads MLKVTTSRPWVCSRCVRRQVQSRRRL. Positions 26 to 51 are disordered; the sequence is LATASTQYRESRPVPVDNSAPGAKRD. H566 is a binding site for Zn(2+). E567 is a catalytic residue. Zn(2+)-binding residues include H570 and H573.

This sequence belongs to the peptidase M3 family. Zn(2+) is required as a cofactor.

The protein localises to the mitochondrion matrix. The catalysed reaction is Release of an N-terminal octapeptide as second stage of processing of some proteins imported into the mitochondrion.. Cleaves proteins, imported into the mitochondrion, to their mature size. While most mitochondrial precursor proteins are processed to the mature form in one step by mitochondrial processing peptidase (MPP), the sequential cleavage by MIP of an octapeptide after initial processing by MPP is a required step for a subgroup of nuclear-encoded precursor proteins destined for the matrix or the inner membrane. The polypeptide is Mitochondrial intermediate peptidase (oct1) (Botryotinia fuckeliana (strain B05.10) (Noble rot fungus)).